Reading from the N-terminus, the 239-residue chain is Tetratricopeptide repeat protein 9B (239 aa).

Disordered regions lie at residues 1-57 (MQRG…LGAA) and 99-126 (QGAR…SEEQ). A phosphoserine mark is found at Ser7 and Ser27. A compositionally biased stretch (pro residues) spans 16 to 31 (PEPPPRPPPALSPPGS). One copy of the TPR 1 repeat lies at 65-99 (AVAFKAEGQRCYREKKFREAIGKYHRALLQLKAAQ). The segment covering 106–116 (LPAPAPGPTSS) has biased composition (pro residues). The TPR 2 repeat unit spans residues 171–204 (FKATYRAGIAFYHLGDYARALRYLQEARSREPTD).

The protein belongs to the TTC9 family.

In Homo sapiens (Human), this protein is Tetratricopeptide repeat protein 9B (TTC9B).